We begin with the raw amino-acid sequence, 377 residues long: Cytochrome c peroxidase, mitochondrial (377 aa).

Residues 1–17 (MSFRAPNLIRSAAGRRA) constitute a mitochondrion transit peptide. His-138 serves as the catalytic Proton acceptor. His-261 is a binding site for heme b. Trp-277 functions as the Tryptophan radical intermediate in the catalytic mechanism.

The protein belongs to the peroxidase family. Cytochrome c peroxidase subfamily. Forms a one-to-one complex with cytochrome c. Heme b serves as cofactor.

Its subcellular location is the mitochondrion matrix. The protein resides in the mitochondrion intermembrane space. The catalysed reaction is 2 Fe(II)-[cytochrome c] + H2O2 + 2 H(+) = 2 Fe(III)-[cytochrome c] + 2 H2O. In terms of biological role, destroys radicals which are normally produced within the cells and which are toxic to biological systems. This Cryptococcus neoformans var. neoformans serotype D (strain JEC21 / ATCC MYA-565) (Filobasidiella neoformans) protein is Cytochrome c peroxidase, mitochondrial (CCP1).